The chain runs to 204 residues: Recombination protein RecR (204 aa).

Residues 58–75 (CSVCQNITDVGVDPCALC) form a C4-type zinc finger. Residues 83 to 181 (SVICVVESPV…HVTKIARGIP (99 aa)) enclose the Toprim domain.

This sequence belongs to the RecR family.

Functionally, may play a role in DNA repair. It seems to be involved in an RecBC-independent recombinational process of DNA repair. It may act with RecF and RecO. This is Recombination protein RecR from Pelodictyon phaeoclathratiforme (strain DSM 5477 / BU-1).